A 498-amino-acid chain; its full sequence is Calcium-dependent protein kinase 22 (498 aa).

G2 carries N-myristoyl glycine lipidation. The region spanning 36–305 is the Protein kinase domain; it reads YSFGDELGKG…AADVLEHPWM (270 aa). ATP is bound by residues 42 to 50 and K65; that span reads LGKGNFGTT. The Proton acceptor role is filled by D164. At S204 the chain carries Phosphoserine. The tract at residues 309–339 is autoinhibitory domain; it reads APDKPIDNVVLSRMKQFRAMNKLKKLALKVI. EF-hand domains follow at residues 346–381, 382–417, 418–453, and 454–488; these read EEIK…HGSK, LSET…RHRL, ERDE…HGMG, and DEAN…GILQ. D359, D361, S363, S365, E370, D395, D397, N399, T401, E406, D431, D433, S435, H437, E442, D466, N468, D470, K472, and E477 together coordinate Ca(2+).

The protein belongs to the protein kinase superfamily. Ser/Thr protein kinase family. CDPK subfamily.

It localises to the membrane. The catalysed reaction is L-seryl-[protein] + ATP = O-phospho-L-seryl-[protein] + ADP + H(+). It carries out the reaction L-threonyl-[protein] + ATP = O-phospho-L-threonyl-[protein] + ADP + H(+). Its activity is regulated as follows. Activated by calcium. Autophosphorylation may play an important role in the regulation of the kinase activity. May play a role in signal transduction pathways that involve calcium as a second messenger. This Arabidopsis thaliana (Mouse-ear cress) protein is Calcium-dependent protein kinase 22 (CPK22).